The primary structure comprises 663 residues: Tripartite terminase subunit 3 (663 aa).

The short motif at 205–212 (VPRRHGKT) is the Walker A motif element. Positions 297–302 (LLIVDE) match the Walker B motif motif. The active-site For ATPase activity is the Glu-302. Catalysis depends on for nuclease activity residues Asp-455, Glu-526, and Asp-640.

Belongs to the herpesviridae TRM3 protein family. As to quaternary structure, interacts with the terminase subunits TRM1 and TRM2. Interacts with portal protein.

The protein localises to the host nucleus. Its function is as follows. Component of the molecular motor that translocates viral genomic DNA in empty capsid during DNA packaging. Forms a tripartite terminase complex together with TRM1 and TRM2 in the host cytoplasm. Once the complex reaches the host nucleus, it interacts with the capsid portal vertex. This portal forms a ring in which genomic DNA is translocated into the capsid. TRM3 carries an RNase H-like nuclease activity that plays an important role for the cleavage of concatemeric viral DNA into unit length genomes. The polypeptide is Tripartite terminase subunit 3 (Human herpesvirus 7 (strain JI) (HHV-7)).